Consider the following 249-residue polypeptide: LexA repressor (249 aa).

The interval 1–25 (MAAAATGGRATSQPKKTTKGLTPRQ) is disordered. The segment at residues 45–65 (MREIGDTVGLASLSSVTHQLS) is a DNA-binding region (H-T-H motif). Residues Ser-173 and Lys-210 each act as for autocatalytic cleavage activity in the active site.

It belongs to the peptidase S24 family. Homodimer.

The catalysed reaction is Hydrolysis of Ala-|-Gly bond in repressor LexA.. Represses a number of genes involved in the response to DNA damage (SOS response), including recA and lexA. In the presence of single-stranded DNA, RecA interacts with LexA causing an autocatalytic cleavage which disrupts the DNA-binding part of LexA, leading to derepression of the SOS regulon and eventually DNA repair. The polypeptide is LexA repressor (Pseudarthrobacter chlorophenolicus (strain ATCC 700700 / DSM 12829 / CIP 107037 / JCM 12360 / KCTC 9906 / NCIMB 13794 / A6) (Arthrobacter chlorophenolicus)).